We begin with the raw amino-acid sequence, 79 residues long: Cell division protein ZapB (79 aa).

Positions 6-78 (FEKLEVKVQQ…LRALLGKMEE (73 aa)) form a coiled coil.

It belongs to the ZapB family. In terms of assembly, homodimer. The ends of the coiled-coil dimer bind to each other, forming polymers. Interacts with FtsZ.

It is found in the cytoplasm. In terms of biological role, non-essential, abundant cell division factor that is required for proper Z-ring formation. It is recruited early to the divisome by direct interaction with FtsZ, stimulating Z-ring assembly and thereby promoting cell division earlier in the cell cycle. Its recruitment to the Z-ring requires functional FtsA or ZipA. The polypeptide is Cell division protein ZapB (Yersinia enterocolitica serotype O:8 / biotype 1B (strain NCTC 13174 / 8081)).